Consider the following 357-residue polypeptide: Peptide chain release factor 1 (357 aa).

Glutamine 236 carries the N5-methylglutamine modification. The segment covering 284-293 has biased composition (basic and acidic residues); that stretch reads RRKKDQERAN. The disordered stretch occupies residues 284 to 313; the sequence is RRKKDQERANNRRKQIGSGDRSERIRTYNF.

The protein belongs to the prokaryotic/mitochondrial release factor family. Post-translationally, methylated by PrmC. Methylation increases the termination efficiency of RF1.

Its subcellular location is the cytoplasm. Peptide chain release factor 1 directs the termination of translation in response to the peptide chain termination codons UAG and UAA. The sequence is that of Peptide chain release factor 1 from Rickettsia bellii (strain RML369-C).